Here is a 985-residue protein sequence, read N- to C-terminus: Rho guanine nucleotide exchange factor 2 (985 aa).

The interval 1 to 32 is disordered; that stretch reads MSRIESLTRARIDRSKEQATKTREKEKMKEAK. The segment at 39–86 adopts a Phorbol-ester/DAG-type zinc-finger fold; that stretch reads GHLFTTISVSGMTMCYACNKSITAKEALICPTCNVTIHNRCKDTLANC. Phosphoserine is present on residues Ser-109, Ser-122, Ser-129, Ser-133, and Ser-137. Positions 131–161 are interaction with DYNLT1; it reads RQSLLGSRRGLSSLSLAKSVSTTNIAGHFND. Phosphoserine; by PAK4 is present on Ser-143. Phosphoserine occurs at positions 151, 163, 172, 174, and 177. Residues 236 to 433 enclose the DH domain; the sequence is KKQDVIYELI…KELLSNVDQD (198 aa). Lys-354 bears the N6-acetyllysine mark. Residues 473 to 572 form the PH domain; it reads KLIHDGCLLW…WIRVIQQSVR (100 aa). Residues 591–615 are a coiled coil; the sequence is LRRIKTKLQQKNQALVELLQMNVEL. 2 positions are modified to phosphoserine: Ser-646 and Ser-649. Residue Thr-680 is modified to Phosphothreonine; by MAPK1 or MAPK3. A phosphoserine mark is found at Ser-692, Ser-710, and Ser-781. Thr-795 is modified (phosphothreonine). Residues 797 to 866 are a coiled coil; sequence EKQATELALL…RQLAALGQNE (70 aa). The residue at position 885 (Ser-885) is a Phosphoserine. 2 disordered regions span residues 890–909 and 918–985; these read DALY…DRLD and HRPF…ASES. At Tyr-893 the chain carries Phosphotyrosine. Ser-895 carries the phosphoserine; by PAK4 modification. Over residues 919–938 the composition is skewed to basic and acidic residues; the sequence is RPFDDREAQELGSPEDRLQD. Residues Ser-931, Ser-939, and Ser-940 each carry the phosphoserine modification. Positions 940 to 949 are enriched in acidic residues; it reads SDPDTCSEEE. Thr-944 carries the post-translational modification Phosphothreonine. Phosphoserine is present on residues Ser-946, Ser-951, Ser-952, Ser-955, and Ser-959.

As to quaternary structure, found in a complex composed at least of ARHGEF2, NOD2 and RIPK2. Interacts with RIPK2; the interaction mediates tyrosine phosphorylation of RIPK2 by Src kinase CSK. Interacts with RIPK1 and RIPK3. Interacts with YWHAZ/14-3-3 zeta; when phosphorylated at Ser-885. Interacts with the kinases PAK4, AURKA and MAPK1. Interacts with RHOA and RAC1. Interacts with NOD1. Interacts (via the N- terminal zinc finger) with CAPN6 (via domain II). Interacts with DYNLT1. Phosphorylation of Ser-885 by PAK1 induces binding to protein YWHAZ, promoting its relocation to microtubules and the inhibition of its activity. Phosphorylated by AURKA and CDK1 during mitosis, which negatively regulates its activity. Phosphorylation by MAPK1 or MAPK3 increases nucleotide exchange activity. Phosphorylation by PAK4 releases GEF-H1 from the microtubules. Phosphorylated on serine, threonine and tyrosine residues in a RIPK2-dependent manner.

The protein resides in the cytoplasm. It is found in the cytoskeleton. The protein localises to the cell junction. It localises to the tight junction. Its subcellular location is the golgi apparatus. The protein resides in the spindle. It is found in the cytoplasmic vesicle. Activates Rho-GTPases by promoting the exchange of GDP for GTP. May be involved in epithelial barrier permeability, cell motility and polarization, dendritic spine morphology, antigen presentation, leukemic cell differentiation, cell cycle regulation, innate immune response, and cancer. Binds Rac-GTPases, but does not seem to promote nucleotide exchange activity toward Rac-GTPases. May stimulate instead the cortical activity of Rac. Inactive toward CDC42, TC10, or Ras-GTPases. Forms an intracellular sensing system along with NOD1 for the detection of microbial effectors during cell invasion by pathogens. Involved in innate immune signaling transduction pathway promoting cytokine IL6/interleukin-6 and TNF-alpha secretion in macrophage upon stimulation by bacterial peptidoglycans; acts as a signaling intermediate between NOD2 receptor and RIPK2 kinase. Contributes to the tyrosine phosphorylation of RIPK2 through Src tyrosine kinase leading to NF-kappaB activation by NOD2. Overexpression activates Rho-, but not Rac-GTPases, and increases paracellular permeability. Involved in neuronal progenitor cell division and differentiation. Involved in the migration of precerebellar neurons. This chain is Rho guanine nucleotide exchange factor 2 (Arhgef2), found in Rattus norvegicus (Rat).